Reading from the N-terminus, the 235-residue chain is Fibrillarin-like rRNA/tRNA 2'-O-methyltransferase (235 aa).

S-adenosyl-L-methionine is bound by residues 91–92 (TT), 110–111 (EF), 137–138 (DA), and 157–160 (DVAQ).

This sequence belongs to the methyltransferase superfamily. Fibrillarin family. Interacts with nop5. Component of box C/D small ribonucleoprotein (sRNP) particles that contain rpl7ae, FlpA and nop5, plus a guide RNA.

Its function is as follows. Involved in pre-rRNA and tRNA processing. Utilizes the methyl donor S-adenosyl-L-methionine to catalyze the site-specific 2'-hydroxyl methylation of ribose moieties in rRNA and tRNA. Site specificity is provided by a guide RNA that base pairs with the substrate. Methylation occurs at a characteristic distance from the sequence involved in base pairing with the guide RNA. The protein is Fibrillarin-like rRNA/tRNA 2'-O-methyltransferase of Pyrobaculum neutrophilum (strain DSM 2338 / JCM 9278 / NBRC 100436 / V24Sta) (Thermoproteus neutrophilus).